A 370-amino-acid polypeptide reads, in one-letter code: 2-aminoethylphosphonate--pyruvate transaminase (370 aa).

Lysine 194 is subject to N6-(pyridoxal phosphate)lysine.

The protein belongs to the class-V pyridoxal-phosphate-dependent aminotransferase family. PhnW subfamily. Homodimer. Pyridoxal 5'-phosphate serves as cofactor.

It catalyses the reaction (2-aminoethyl)phosphonate + pyruvate = phosphonoacetaldehyde + L-alanine. Its function is as follows. Involved in phosphonate degradation. This Paraburkholderia phymatum (strain DSM 17167 / CIP 108236 / LMG 21445 / STM815) (Burkholderia phymatum) protein is 2-aminoethylphosphonate--pyruvate transaminase.